The primary structure comprises 576 residues: Lipoprotein LpqB (576 aa).

Positions 1–16 (MRRVTRTIAAAGAAIA) are cleaved as a signal peptide. Cysteine 17 is lipidated: N-palmitoyl cysteine. Cysteine 17 carries the S-diacylglycerol cysteine lipid modification.

Belongs to the LpqB lipoprotein family.

The protein resides in the cell membrane. The polypeptide is Lipoprotein LpqB (Bifidobacterium longum (strain NCC 2705)).